The chain runs to 65 residues: Large ribosomal subunit protein bL32 (65 aa).

The disordered stretch occupies residues 1-45; sequence MAVQQNKKTPSKRGMRRAHDVLKKPTFSVDFSSGETHRRHHVTPD.

This sequence belongs to the bacterial ribosomal protein bL32 family.

The chain is Large ribosomal subunit protein bL32 from Nitrosococcus oceani (strain ATCC 19707 / BCRC 17464 / JCM 30415 / NCIMB 11848 / C-107).